Here is a 482-residue protein sequence, read N- to C-terminus: MAAFQTAAQLARAVQSGETTPQQLLHGALARAEAVRGLNALVSLNSHAEEQAAAVQGRMQAGETLPLAGVPIVVKDNINVTGTRTTCGSRMLANYVSPYTATAAQKLQGAGAVIVGKANMDEFAMGSSTESSASGPTLNPWDHERVPGGSSGGSAVAVAAGISPVSLGSDTGGSVRQPAALCGVYGFKPTYGRVSRYGLVAYASSLDQIGPFARSAEDLALLMNVIAGHDPRDATSLDAPARFAVGGADSLRGLRVGVIRESLGGNTPGVEAALGATLDALRGAGAVVGEVSIPELEYAIAAYYLIAMPEASSNLARYDGMVYGERVPGGDVTRSMTLTREQGFGQEVQRRILLGTYALSSGYYDAYYAKAMKVRRLIADEFTTAFGQYDVLVTPTSPFPAFRRGEKASDPLAMYAADVDTVAVNLAGLPALSVPAGFEEVDGKRLPVGVQFIAPALQDERLLALAGALEAVGAVQLEMPQD.

Active-site charge relay system residues include Lys75 and Ser150. Ser174 functions as the Acyl-ester intermediate in the catalytic mechanism.

This sequence belongs to the amidase family. GatA subfamily. In terms of assembly, heterotrimer of A, B and C subunits.

The catalysed reaction is L-glutamyl-tRNA(Gln) + L-glutamine + ATP + H2O = L-glutaminyl-tRNA(Gln) + L-glutamate + ADP + phosphate + H(+). Its function is as follows. Allows the formation of correctly charged Gln-tRNA(Gln) through the transamidation of misacylated Glu-tRNA(Gln) in organisms which lack glutaminyl-tRNA synthetase. The reaction takes place in the presence of glutamine and ATP through an activated gamma-phospho-Glu-tRNA(Gln). The sequence is that of Glutamyl-tRNA(Gln) amidotransferase subunit A from Deinococcus radiodurans (strain ATCC 13939 / DSM 20539 / JCM 16871 / CCUG 27074 / LMG 4051 / NBRC 15346 / NCIMB 9279 / VKM B-1422 / R1).